We begin with the raw amino-acid sequence, 340 residues long: S-adenosylmethionine:tRNA ribosyltransferase-isomerase (340 aa).

This sequence belongs to the QueA family. In terms of assembly, monomer.

The protein resides in the cytoplasm. The enzyme catalyses 7-aminomethyl-7-carbaguanosine(34) in tRNA + S-adenosyl-L-methionine = epoxyqueuosine(34) in tRNA + adenine + L-methionine + 2 H(+). It participates in tRNA modification; tRNA-queuosine biosynthesis. Its function is as follows. Transfers and isomerizes the ribose moiety from AdoMet to the 7-aminomethyl group of 7-deazaguanine (preQ1-tRNA) to give epoxyqueuosine (oQ-tRNA). This is S-adenosylmethionine:tRNA ribosyltransferase-isomerase from Vesicomyosocius okutanii subsp. Calyptogena okutanii (strain HA).